Here is a 508-residue protein sequence, read N- to C-terminus: ATP synthase subunit alpha (508 aa).

Residue 169 to 176 coordinates ATP; the sequence is GDRGTGKS.

Belongs to the ATPase alpha/beta chains family. In terms of assembly, F-type ATPases have 2 components, CF(1) - the catalytic core - and CF(0) - the membrane proton channel. CF(1) has five subunits: alpha(3), beta(3), gamma(1), delta(1), epsilon(1). CF(0) has three main subunits: a(1), b(2) and c(9-12). The alpha and beta chains form an alternating ring which encloses part of the gamma chain. CF(1) is attached to CF(0) by a central stalk formed by the gamma and epsilon chains, while a peripheral stalk is formed by the delta and b chains.

It is found in the cell membrane. It carries out the reaction ATP + H2O + 4 H(+)(in) = ADP + phosphate + 5 H(+)(out). Its function is as follows. Produces ATP from ADP in the presence of a proton gradient across the membrane. The alpha chain is a regulatory subunit. This Natranaerobius thermophilus (strain ATCC BAA-1301 / DSM 18059 / JW/NM-WN-LF) protein is ATP synthase subunit alpha.